Reading from the N-terminus, the 1445-residue chain is CD109 antigen (1445 aa).

An N-terminal signal peptide occupies residues 1–21 (MQGPPLLTAAHLLCVCTAALA). N-linked (GlcNAc...) asparagine glycosylation is found at N68, N118, N247, N279, N365, N419, N513, and N645. Residues 593 to 702 (DKSVNLMNAS…TWIWLDTNMG (110 aa)) form a bait region (approximate) region. The isoglutamyl cysteine thioester (Cys-Gln) cross-link spans 921–924 (CGEQ). N-linked (GlcNAc...) asparagine glycosylation is found at N1086 and N1355. A1420 carries GPI-anchor amidated alanine lipidation. Residues 1421–1445 (SGSHHHSSVIFIFCFKLLYFMELWL) constitute a propeptide, removed in mature form.

It belongs to the protease inhibitor I39 (alpha-2-macroglobulin) family. In terms of assembly, heterodimer; disulfide-linked. Interacts with TGFB1 and TGFBR1. Forms a heteromeric complex with TGFBR1, TGFBR2 and TGFBR3 in a ligand-independent manner. In terms of processing, N-glycosylated. Post-translationally, 2 forms of 150 (p150) and 120 kDa (p120) exist due to proteolytic degradation from a 180 kDa form. In terms of tissue distribution, widely expressed with high level in uterus, aorta, heart, lung, trachea, placenta and in fetal heart, kidney, liver, spleen and lung. Expressed by CD34(+) acute myeloid leukemia cell lines, T-cell lines, activated T-lymphoblasts, endothelial cells and activated platelets. Isoform 4 is expressed in placenta. Isoform 1 is expressed in keratinocytes and placenta.

Its subcellular location is the cell membrane. Functionally, modulates negatively TGFB1 signaling in keratinocytes. The chain is CD109 antigen (CD109) from Homo sapiens (Human).